The chain runs to 208 residues: MSRYRGSVCRQCRRENMKLFLKGDRCFSDKCSFDRRSYPPGQHGQRRMKHSDYGIQLREKQKVRRIYGIGEKQFRIIFKKADSLKGITGETLLSLLERRLDNVVFRLGFTSSRTQGRHFVRHNHFTVNGKKVNIPSYIIKAGDVVELKEKSKKVQAITDSLDTVVRRGVPQWLELDKDGFKGVVKGMPAREDITLPIQEQLIVELYSK.

The S4 RNA-binding domain occupies 98–168 (RRLDNVVFRL…DSLDTVVRRG (71 aa)).

Belongs to the universal ribosomal protein uS4 family. As to quaternary structure, part of the 30S ribosomal subunit. Contacts protein S5. The interaction surface between S4 and S5 is involved in control of translational fidelity.

Its function is as follows. One of the primary rRNA binding proteins, it binds directly to 16S rRNA where it nucleates assembly of the body of the 30S subunit. With S5 and S12 plays an important role in translational accuracy. The chain is Small ribosomal subunit protein uS4 from Desulforapulum autotrophicum (strain ATCC 43914 / DSM 3382 / VKM B-1955 / HRM2) (Desulfobacterium autotrophicum).